We begin with the raw amino-acid sequence, 535 residues long: Beta-amylase (535 aa).

A propeptide spans Met-1–Glu-2 (removed in mature form). Val-3 carries the N-acetylvaline modification. Positions 51, 91, and 99 each coordinate substrate. Residue Glu-184 is the Proton donor of the active site. Residues Lys-293, His-298, and Thr-340 each contribute to the substrate site. Glu-378 serves as the catalytic Proton acceptor. Residues Asn-379–Ala-380 and Arg-418 contribute to the substrate site. A run of 3 repeats spans residues Gly-489 to Glu-499, Gly-500 to Lys-510, and Gly-511 to Glu-521. The 4 X 11 AA tandem repeats stretch occupies residues Gly-489–Pro-532. A propeptide spans Pro-490 to Met-535 (removed in mature form). A disordered region spans residues Thr-513–Met-535. A 4; approximate repeat occupies Asp-522–Pro-532.

It belongs to the glycosyl hydrolase 14 family. In terms of assembly, monomer. In terms of tissue distribution, endosperm.

It carries out the reaction Hydrolysis of (1-&gt;4)-alpha-D-glucosidic linkages in polysaccharides so as to remove successive maltose units from the non-reducing ends of the chains.. Catalyzes the liberation of maltose from 1,4-alpha-D glucans. This Hordeum vulgare subsp. spontaneum (Wild barley) protein is Beta-amylase.